The following is a 237-amino-acid chain: tRNA (guanine-N(7)-)-methyltransferase (237 aa).

Positions 35, 60, 87, and 113 each coordinate S-adenosyl-L-methionine. D113 is an active-site residue. Residues K117 and D149 each contribute to the substrate site.

Belongs to the class I-like SAM-binding methyltransferase superfamily. TrmB family.

The catalysed reaction is guanosine(46) in tRNA + S-adenosyl-L-methionine = N(7)-methylguanosine(46) in tRNA + S-adenosyl-L-homocysteine. It functions in the pathway tRNA modification; N(7)-methylguanine-tRNA biosynthesis. Catalyzes the formation of N(7)-methylguanine at position 46 (m7G46) in tRNA. The chain is tRNA (guanine-N(7)-)-methyltransferase from Synechococcus sp. (strain WH7803).